A 740-amino-acid chain; its full sequence is E3 ubiquitin-protein ligase TRIM9 (740 aa).

The RING-type; degenerate zinc finger occupies 7 to 30; sequence CPTCKQLYANPVLLPCFHALCLGC. A compositionally biased stretch (gly residues) spans 64–73; sequence GNGGGAGGGA. Residues 64 to 114 are disordered; sequence GNGGGAGGGAAAPVTNPNGPGTRHSSHSSAASTASSNTGSESVTSDQDQSD. A compositionally biased stretch (low complexity) spans 74–105; the sequence is AAPVTNPNGPGTRHSSHSSAASTASSNTGSES. A B box-type 1; atypical zinc finger spans residues 195 to 244; the sequence is REALRCQMCETDPKVASLICEQCEIRYCDACRELTHPARGPLAKHTLVKP. 8 residues coordinate Zn(2+): C200, C203, C225, H230, C255, H258, C277, and H283. The segment at 250-291 adopts a B box-type 2 zinc-finger fold; that stretch reads QRESVCGEHEETLSQYCLSCKAPACGLCIGELRHQAHDVQSI. A coiled-coil region spans residues 294 to 324; the sequence is TCKAQKTELSHNLQQLSEKARSTTEFIQRLK. Residues 399 to 459 enclose the COS domain; that stretch reads LKETDSAAFL…ARAIDNLNFI (61 aa). The Fibronectin type-III domain maps to 474–567; it reads APMTPTILPS…ELIGLQTAEV (94 aa). Residues 549–736 enclose the B30.2/SPRY domain; the sequence is NSAGEGEYSE…TMHTAMDAPK (188 aa).

Belongs to the TRIM/RBCC family. As to quaternary structure, interacts (via fibronectin type-III domain) with pico. Interacts (via SPRY domain) with netrin receptor fra.

The protein localises to the cell projection. The protein resides in the axon. It is found in the perikaryon. The enzyme catalyses S-ubiquitinyl-[E2 ubiquitin-conjugating enzyme]-L-cysteine + [acceptor protein]-L-lysine = [E2 ubiquitin-conjugating enzyme]-L-cysteine + N(6)-ubiquitinyl-[acceptor protein]-L-lysine.. The protein operates within protein modification; protein ubiquitination. Functionally, E3 ubiquitin-protein ligase activity. During embryonic and larval development, regulates the pattern of axonal projections of class IV nociceptive sensory neurons (C4da) downstream of netrin receptor fra. Regulates fine-scale topography of C4da axon terminals upon neuronal activity. During eye development, consolidates the attachment of R8 photoreceptor growth cones to the target medulla layer, probably downstream of fra. This chain is E3 ubiquitin-protein ligase TRIM9, found in Drosophila melanogaster (Fruit fly).